We begin with the raw amino-acid sequence, 131 residues long: Small ribosomal subunit protein uS11 (131 aa).

This sequence belongs to the universal ribosomal protein uS11 family. In terms of assembly, part of the 30S ribosomal subunit. Interacts with proteins S7 and S18. Binds to IF-3.

Its function is as follows. Located on the platform of the 30S subunit, it bridges several disparate RNA helices of the 16S rRNA. Forms part of the Shine-Dalgarno cleft in the 70S ribosome. The chain is Small ribosomal subunit protein uS11 from Helicobacter pylori (strain P12).